The primary structure comprises 374 residues: Double homeobox protein 4C (374 aa).

Polar residues predominate over residues 1–10; it reads MALPTPSDST. 3 disordered regions span residues 1–24, 72–102, and 218–374; these read MALP…RRRL, SRQL…TAVT, and LQPS…YELL. DNA-binding regions (homeobox) lie at residues 19 to 78 and 94 to 153; these read GRRR…LRQH and GRRK…PGQG. The segment covering 265-274 has biased composition (basic and acidic residues); the sequence is KSREDRDPQR. Composition is skewed to low complexity over residues 278–302 and 319–329; these read PGPC…LAPP and AGAAWEPQAGA. Residues 354–374 are compositionally biased toward polar residues; that stretch reads QPLQEPGRSSTVTSSLLYELL.

In terms of assembly, may interact with MYF5; regulates MYF5 expression. Expressed in muscles, as well as in primary myoblasts and myotubes (at protein level).

Its subcellular location is the nucleus. The protein localises to the cytoplasm. Functionally, down-regulates MYOD1 expression and may up-regulate MYF5 expression. May regulate microRNA (miRNA) transcription, up-regulating the expression of some myogenic miRNAs, including MIR1-1, MIR133A2, MIR133B and MIR206. Impairs the differentiation of myoblasts and may be involved in muscle regeneration. Reduces DUX4-induced nuclear localization of CTNNB1/beta-catenin and its subsequent activation of target genes. This is Double homeobox protein 4C (DUX4L9) from Homo sapiens (Human).